Consider the following 1265-residue polypeptide: Protein transport protein SEC31 (1265 aa).

7 WD repeats span residues 6–46 (EIAR…ELWD), 61–105 (TVDN…KTKD), 116–156 (KHTG…EPFA), 162–202 (TPMD…EVLH), 209–252 (GGRA…APEK), 256–296 (GHKK…KLGE), and 299–339 (TTAN…PSVS). One copy of the WD 8; interaction with SEC13 repeat lies at 380 to 403 (SFGFGSKLVIINTDSSGKSTVKVD). Positions 457 to 480 (KESLFEDANNDEKEATSPETKKEN) are enriched in basic and acidic residues. 3 disordered regions span residues 457 to 485 (KESLFEDANNDEKEATSPETKKENGEDDF), 765 to 784 (VKSSANAKIAKPASSSGQTR), and 793 to 1163 (PAYA…IPEN). The segment covering 794-810 (AYAPPVQAPPVQAPQPP) has biased composition (pro residues). Composition is skewed to low complexity over residues 811-824 (LVQQQQQQQQQQQP), 865-875 (TPSSLSGTTSG), 901-931 (AKTAAPRRAAAAATPPVSTPTPVSAPAFGSP), 939-951 (SQPGSVGSVSSAG), and 969-987 (SISRSTSRTTVPTSSTVPA). Residues 1004-1023 (SDASQPPSSGFASPTLNSSP) are compositionally biased toward polar residues. Composition is skewed to pro residues over residues 1062 to 1071 (YAPPKNPYAV) and 1083 to 1101 (APPPPAPKLGSAAPPPPQP).

Belongs to the WD repeat SEC31 family. As to quaternary structure, the COPII coat is composed of at least 5 proteins: the SEC23/24 complex, the SEC13/31 complex, and the protein SAR1. SEC13 and SEC31 make a 2:2 tetramer that forms the edge element of the COPII outer coat. The tetramer self-assembles in multiple copies to form the complete polyhedral cage. Interacts (via WD 8) with SEC13.

The protein localises to the cytoplasmic vesicle. It localises to the COPII-coated vesicle membrane. Its subcellular location is the endoplasmic reticulum membrane. In terms of biological role, component of the coat protein complex II (COPII) which promotes the formation of transport vesicles from the endoplasmic reticulum (ER). The coat has two main functions, the physical deformation of the endoplasmic reticulum membrane into vesicles and the selection of cargo molecules. The protein is Protein transport protein SEC31 (PGA63) of Candida albicans (strain SC5314 / ATCC MYA-2876) (Yeast).